A 1272-amino-acid chain; its full sequence is RING finger protein PFE0100w (1272 aa).

Positions 216-260 (INKINDVSNNDPKKDNNEKNTSSNNITHNNYNDISNNNNNNNNIN) are disordered. Residues 234-260 (KNTSSNNITHNNYNDISNNNNNNNNIN) are compositionally biased toward low complexity. The CHCR repeat unit spans residues 608–752 (YIQTINYLET…GYKFIKYYPQ (145 aa)). The chain crosses the membrane as a helical span at residues 771-791 (IFIPLFLDNIDFLFMFIVKFL). Disordered regions lie at residues 842-862 (NQNH…NNSQ) and 908-970 (ENQT…IINK). Composition is skewed to low complexity over residues 850 to 861 (SDSHNLSDDNNS) and 909 to 956 (NQTN…IQTN). The span at 957–967 (KQKGNSTTNKI) shows a compositional bias: polar residues. A coiled-coil region spans residues 1146–1182 (MNDMNKNINDKCIEIEKDKKELEKIKKKQLKKKYNFY). The RING-type; atypical zinc-finger motif lies at 1189–1224 (CSICKEILSVPMIHFLCKHSYHSYCLKDNNVCILCH).

It is found in the membrane. This chain is RING finger protein PFE0100w, found in Plasmodium falciparum (isolate 3D7).